Consider the following 391-residue polypeptide: Chaperone protein DnaJ (391 aa).

The 65-residue stretch at 6–70 folds into the J domain; that stretch reads DYYEILEVSR…EKRKLYDTYG (65 aa). The CR-type zinc-finger motif lies at 145-226; sequence GCIKNVKYTR…CKSRRMVDEV (82 aa). Zn(2+)-binding residues include Cys158, Cys161, Cys174, Cys177, Cys200, Cys203, Cys214, and Cys217. CXXCXGXG motif repeat units lie at residues 158–165, 174–181, 200–207, and 214–221; these read CPDCNGSG, CSDCNGEG, CPSCKGEG, and CKKCKSRR.

The protein belongs to the DnaJ family. Homodimer. Zn(2+) serves as cofactor.

It is found in the cytoplasm. Its function is as follows. Participates actively in the response to hyperosmotic and heat shock by preventing the aggregation of stress-denatured proteins and by disaggregating proteins, also in an autonomous, DnaK-independent fashion. Unfolded proteins bind initially to DnaJ; upon interaction with the DnaJ-bound protein, DnaK hydrolyzes its bound ATP, resulting in the formation of a stable complex. GrpE releases ADP from DnaK; ATP binding to DnaK triggers the release of the substrate protein, thus completing the reaction cycle. Several rounds of ATP-dependent interactions between DnaJ, DnaK and GrpE are required for fully efficient folding. Also involved, together with DnaK and GrpE, in the DNA replication of plasmids through activation of initiation proteins. The protein is Chaperone protein DnaJ of Mycoplasmoides gallisepticum (strain R(low / passage 15 / clone 2)) (Mycoplasma gallisepticum).